Consider the following 208-residue polypeptide: Ribosomal RNA large subunit methyltransferase E (208 aa).

Residues Gly-63, Trp-65, Asp-83, Asp-99, and Asp-124 each coordinate S-adenosyl-L-methionine. The Proton acceptor role is filled by Lys-164.

The protein belongs to the class I-like SAM-binding methyltransferase superfamily. RNA methyltransferase RlmE family.

The protein resides in the cytoplasm. The enzyme catalyses uridine(2552) in 23S rRNA + S-adenosyl-L-methionine = 2'-O-methyluridine(2552) in 23S rRNA + S-adenosyl-L-homocysteine + H(+). Its function is as follows. Specifically methylates the uridine in position 2552 of 23S rRNA at the 2'-O position of the ribose in the fully assembled 50S ribosomal subunit. The polypeptide is Ribosomal RNA large subunit methyltransferase E (Enterobacter sp. (strain 638)).